The chain runs to 337 residues: Glycerol-3-phosphate dehydrogenase [NAD(P)+] (337 aa).

S11, W12, R32, and K109 together coordinate NADPH. Residues K109, G140, and S142 each contribute to the sn-glycerol 3-phosphate site. A144 provides a ligand contact to NADPH. 5 residues coordinate sn-glycerol 3-phosphate: K195, D248, S258, R259, and N260. K195 (proton acceptor) is an active-site residue. R259 provides a ligand contact to NADPH. NADPH is bound by residues V283 and E285.

The protein belongs to the NAD-dependent glycerol-3-phosphate dehydrogenase family.

It is found in the cytoplasm. The catalysed reaction is sn-glycerol 3-phosphate + NAD(+) = dihydroxyacetone phosphate + NADH + H(+). It carries out the reaction sn-glycerol 3-phosphate + NADP(+) = dihydroxyacetone phosphate + NADPH + H(+). Its pathway is membrane lipid metabolism; glycerophospholipid metabolism. In terms of biological role, catalyzes the reduction of the glycolytic intermediate dihydroxyacetone phosphate (DHAP) to sn-glycerol 3-phosphate (G3P), the key precursor for phospholipid synthesis. This chain is Glycerol-3-phosphate dehydrogenase [NAD(P)+], found in Limosilactobacillus fermentum (strain NBRC 3956 / LMG 18251) (Lactobacillus fermentum).